A 194-amino-acid polypeptide reads, in one-letter code: Peptidyl-tRNA hydrolase (194 aa).

TRNA is bound at residue tyrosine 17. The active-site Proton acceptor is histidine 22. Residues tyrosine 68, asparagine 70, and asparagine 116 each contribute to the tRNA site.

It belongs to the PTH family. In terms of assembly, monomer.

Its subcellular location is the cytoplasm. The enzyme catalyses an N-acyl-L-alpha-aminoacyl-tRNA + H2O = an N-acyl-L-amino acid + a tRNA + H(+). Its function is as follows. Hydrolyzes ribosome-free peptidyl-tRNAs (with 1 or more amino acids incorporated), which drop off the ribosome during protein synthesis, or as a result of ribosome stalling. In terms of biological role, catalyzes the release of premature peptidyl moieties from peptidyl-tRNA molecules trapped in stalled 50S ribosomal subunits, and thus maintains levels of free tRNAs and 50S ribosomes. The protein is Peptidyl-tRNA hydrolase of Pseudomonas savastanoi pv. phaseolicola (strain 1448A / Race 6) (Pseudomonas syringae pv. phaseolicola (strain 1448A / Race 6)).